The chain runs to 71 residues: DNA-directed RNA polymerase subunit 10-like protein (71 aa).

Positions 7, 10, 44, and 45 each coordinate Zn(2+).

The protein belongs to the archaeal Rpo10/eukaryotic RPB10 RNA polymerase subunit family. As to quaternary structure, interacts with IYO.

It localises to the nucleus. The chain is DNA-directed RNA polymerase subunit 10-like protein from Arabidopsis thaliana (Mouse-ear cress).